Here is a 309-residue protein sequence, read N- to C-terminus: Branched-chain-amino-acid aminotransferase (309 aa).

K160 carries the post-translational modification N6-(pyridoxal phosphate)lysine.

It belongs to the class-IV pyridoxal-phosphate-dependent aminotransferase family. Homohexamer. The cofactor is pyridoxal 5'-phosphate.

The enzyme catalyses L-leucine + 2-oxoglutarate = 4-methyl-2-oxopentanoate + L-glutamate. It catalyses the reaction L-isoleucine + 2-oxoglutarate = (S)-3-methyl-2-oxopentanoate + L-glutamate. It carries out the reaction L-valine + 2-oxoglutarate = 3-methyl-2-oxobutanoate + L-glutamate. It functions in the pathway amino-acid biosynthesis; L-isoleucine biosynthesis; L-isoleucine from 2-oxobutanoate: step 4/4. It participates in amino-acid biosynthesis; L-leucine biosynthesis; L-leucine from 3-methyl-2-oxobutanoate: step 4/4. Its pathway is amino-acid biosynthesis; L-valine biosynthesis; L-valine from pyruvate: step 4/4. Functionally, acts on leucine, isoleucine and valine. This is Branched-chain-amino-acid aminotransferase (ilvE) from Salmonella typhi.